A 233-amino-acid polypeptide reads, in one-letter code: Superoxide dismutase [Mn], mitochondrial (233 aa).

The N-terminal 26 residues, 1–26 (MFAKTAAANLTKKGGLSLLSTTARRT), are a transit peptide targeting the mitochondrion. The Mn(2+) site is built by His52 and His107. 2 positions are modified to phosphothreonine: Thr147 and Thr149. Residues Asp194 and His198 each coordinate Mn(2+).

The protein belongs to the iron/manganese superoxide dismutase family. In terms of assembly, homotetramer. It depends on Mn(2+) as a cofactor.

It localises to the mitochondrion matrix. It catalyses the reaction 2 superoxide + 2 H(+) = H2O2 + O2. Functionally, destroys superoxide anion radicals which are normally produced within the cells and which are toxic to biological systems. The polypeptide is Superoxide dismutase [Mn], mitochondrial (SOD2) (Saccharomyces cerevisiae (strain ATCC 204508 / S288c) (Baker's yeast)).